The following is a 378-amino-acid chain: Putative glycosyltransferase ORF378 (378 aa).

The protein belongs to the glycosyltransferase group 1 family. Glycosyltransferase 4 subfamily.

In Acidianus sp. F28 (AFV-2), this protein is Putative glycosyltransferase ORF378.